The following is a 218-amino-acid chain: Small ribosomal subunit protein uS3c (218 aa).

The 76-residue stretch at 43-118 (IKNYVQKNPR…RLNIAIARIS (76 aa)) folds into the KH type-2 domain.

This sequence belongs to the universal ribosomal protein uS3 family. As to quaternary structure, part of the 30S ribosomal subunit.

It localises to the plastid. The protein localises to the chloroplast. The sequence is that of Small ribosomal subunit protein uS3c (rps3) from Acorus calamus (Sweet flag).